A 376-amino-acid chain; its full sequence is PqqA peptide cyclase (376 aa).

Residues 7 to 222 form the Radical SAM core domain; it reads VGLPLWLLAE…TNEYRDKLKA (216 aa). Positions 21, 25, and 28 each coordinate [4Fe-4S] cluster.

The protein belongs to the radical SAM superfamily. PqqE family. As to quaternary structure, interacts with PqqD. The interaction is necessary for activity of PqqE. [4Fe-4S] cluster serves as cofactor.

It carries out the reaction [PQQ precursor protein] + S-adenosyl-L-methionine = E-Y cross-linked-[PQQ precursor protein] + 5'-deoxyadenosine + L-methionine + H(+). It functions in the pathway cofactor biosynthesis; pyrroloquinoline quinone biosynthesis. Catalyzes the cross-linking of a glutamate residue and a tyrosine residue in the PqqA protein as part of the biosynthesis of pyrroloquinoline quinone (PQQ). This chain is PqqA peptide cyclase, found in Pseudomonas putida (strain ATCC 700007 / DSM 6899 / JCM 31910 / BCRC 17059 / LMG 24140 / F1).